The sequence spans 131 residues: Torsin-1A-interacting protein 2, isoform IFRG15 (131 aa).

The protein is Torsin-1A-interacting protein 2, isoform IFRG15 (TOR1AIP2) of Homo sapiens (Human).